The sequence spans 370 residues: E3 ubiquitin-protein ligase E3D (370 aa).

At A2 the chain carries N-acetylalanine. The BRAT1-like motif motif lies at 129 to 159; the sequence is PLPSENWSALVGEWCCHPDPFANKPLHPREN. C144 provides a ligand contact to Zn(2+). An interaction with UBE2C region spans residues 214 to 236; it reads QPSEGSFPNIPRSQFVQSVIARC. An HECT-like region spans residues 332–368; that stretch reads LPSTTCLELLLILSRNNASLPLSLRQMNSFQLWCSHC.

In terms of assembly, interacts with UBE2C/UbcH10 (E2 ubiquitin-conjugating enzyme). In vitro, interacts with cyclin-B. Ubiquitinated by UBCH10 (E2 ubiquitin-conjugating enzyme).

It localises to the cytoplasm. It carries out the reaction S-ubiquitinyl-[E2 ubiquitin-conjugating enzyme]-L-cysteine + [acceptor protein]-L-lysine = [E2 ubiquitin-conjugating enzyme]-L-cysteine + N(6)-ubiquitinyl-[acceptor protein]-L-lysine.. Its pathway is protein modification; protein ubiquitination. Functionally, E3 ubiquitin-protein ligase which accepts ubiquitin from specific E2 ubiquitin-conjugating enzymes, and transfers it to substrates, generally promoting their degradation by the proteasome. Independently of its E3 ubiquitin-protein ligase activity, acts as an inhibitor of CPSF3 endonuclease activity by blocking CPSF3 active site. This chain is E3 ubiquitin-protein ligase E3D (Ube3d), found in Rattus norvegicus (Rat).